The following is a 125-amino-acid chain: Large ribosomal subunit protein eL31 (125 aa).

Residue Met1 is modified to N-acetylmethionine. Phosphoserine is present on Ser15. Lys55 and Lys70 each carry N6-succinyllysine. The residue at position 75 (Lys75) is an N6-acetyllysine; alternate. Lys75 is modified (N6-succinyllysine; alternate). The residue at position 98 (Ser98) is a Phosphoserine.

The protein belongs to the eukaryotic ribosomal protein eL31 family. In terms of assembly, component of the large ribosomal subunit.

Its subcellular location is the cytoplasm. In terms of biological role, component of the large ribosomal subunit. The ribosome is a large ribonucleoprotein complex responsible for the synthesis of proteins in the cell. The sequence is that of Large ribosomal subunit protein eL31 (RPL31) from Pongo abelii (Sumatran orangutan).